Consider the following 746-residue polypeptide: Stromal interaction molecule 2 (746 aa).

The N-terminal stretch at M1–G14 is a signal peptide. Over C15 to F218 the chain is Extracellular. Residues F67–Y102 enclose the EF-hand domain. The Ca(2+) site is built by D80, D82, D84, and E91. A glycan (N-linked (GlcNAc...) asparagine) is linked at N135. The 69-residue stretch at W136–F204 folds into the SAM domain. A helical transmembrane segment spans residues I219–Y235. The Cytoplasmic portion of the chain corresponds to T236–K746. Residues K247–V394 are a coiled coil. The segment at D483–L562 is disordered. Position 523 is a phosphoserine (S523). Residues H537–H549 show a composition bias toward basic residues. 8 positions are modified to phosphoserine: S609, S621, S640, S650, S661, S665, S680, and S697. Positions S685–K746 are disordered. The span at D723–K732 shows a compositional bias: basic and acidic residues. Positions K733–K746 are enriched in basic residues.

In terms of assembly, oligomer with STIM1. Interacts with ORAI1. In terms of processing, glycosylated. Post-translationally, phosphorylated predominantly on Ser residues. As to expression, expressed in all tissues and tumor cell lines examined.

The protein localises to the endoplasmic reticulum membrane. In terms of biological role, plays a role in mediating store-operated Ca(2+) entry (SOCE), a Ca(2+) influx following depletion of intracellular Ca(2+) stores. Functions as a highly sensitive Ca(2+) sensor in the endoplasmic reticulum which activates both store-operated and store-independent Ca(2+)-influx. Regulates basal cytosolic and endoplasmic reticulum Ca(2+) concentrations. Upon mild variations of the endoplasmic reticulum Ca(2+) concentration, translocates from the endoplasmic reticulum to the plasma membrane where it probably activates the Ca(2+) release-activated Ca(2+) (CRAC) channels ORAI1, ORAI2 and ORAI3. May inhibit STIM1-mediated Ca(2+) influx. This chain is Stromal interaction molecule 2 (STIM2), found in Homo sapiens (Human).